The sequence spans 163 residues: Jun dimerization protein 2 (163 aa).

Disordered stretches follow at residues 1–20 and 59–89; these read MMPGQIPDPSVTAGSLPGLG and KRPQPVKSELDEEEERRKRRREKNKVAAARC. Lys-65 is covalently cross-linked (Glycyl lysine isopeptide (Lys-Gly) (interchain with G-Cter in SUMO2)). A bZIP domain is found at 72-135; the sequence is EERRKRRREK…QQLILMLNRH (64 aa). The basic motif stretch occupies residues 74 to 96; that stretch reads RRKRRREKNKVAAARCRNKKKER. The interval 100-128 is leucine-zipper; sequence LQRESERLELMNAELKTQIEELKLERQQL. The residue at position 148 (Thr-148) is a Phosphothreonine; by MAPK8.

It belongs to the bZIP family. ATF subfamily. In terms of assembly, forms a homodimer or heterodimer with JUN, JUNB, JUND, CEBPG and ATF2 thereby inhibiting transactivation by JUN, ATF2 and CEBPG. Binds multiple DNA elements such as cAMP-response element (CRE) and TPA response element (TRE) either as homodimer or heterodimer. Interacts with IRF2BP1. Phosphorylation of Thr-148 by MAPK8 in response to different stress conditions such as, UV irradiation, oxidatives stress and anisomycin treatments. In terms of processing, polyubiquitinated; probably by IRF2BP1. As to expression, ubiquitously expressed in all adult tissues tested as well in embryos.

The protein localises to the nucleus. Functionally, component of the AP-1 transcription factor that represses transactivation mediated by the Jun family of proteins. Involved in a variety of transcriptional responses associated with AP-1, such as UV-induced apoptosis, cell differentiation, tumorigenesis and antitumogeneris. Can also function as a repressor by recruiting histone deacetylase 3/HDAC3 to the promoter region of JUN. May control transcription via direct regulation of the modification of histones and the assembly of chromatin. The polypeptide is Jun dimerization protein 2 (Jdp2) (Mus musculus (Mouse)).